The following is a 398-amino-acid chain: Succinate--CoA ligase [ADP-forming] subunit beta (398 aa).

The ATP-grasp domain maps to 9 to 253 (KELLKSYGVA…EAEEDPKELE (245 aa)). Residues lysine 46, 53–55 (GRG), glutamate 108, cysteine 111, and glutamate 116 contribute to the ATP site. The Mg(2+) site is built by asparagine 208 and aspartate 222. Residues asparagine 273 and 330–332 (GIM) each bind substrate.

Belongs to the succinate/malate CoA ligase beta subunit family. Heterotetramer of two alpha and two beta subunits. Requires Mg(2+) as cofactor.

The enzyme catalyses succinate + ATP + CoA = succinyl-CoA + ADP + phosphate. It carries out the reaction GTP + succinate + CoA = succinyl-CoA + GDP + phosphate. Its pathway is carbohydrate metabolism; tricarboxylic acid cycle; succinate from succinyl-CoA (ligase route): step 1/1. Succinyl-CoA synthetase functions in the citric acid cycle (TCA), coupling the hydrolysis of succinyl-CoA to the synthesis of either ATP or GTP and thus represents the only step of substrate-level phosphorylation in the TCA. The beta subunit provides nucleotide specificity of the enzyme and binds the substrate succinate, while the binding sites for coenzyme A and phosphate are found in the alpha subunit. The polypeptide is Succinate--CoA ligase [ADP-forming] subunit beta (Acidiphilium cryptum (strain JF-5)).